We begin with the raw amino-acid sequence, 351 residues long: 3-dehydroquinate synthase (351 aa).

NAD(+)-binding positions include 60–65, 94–98, 118–119, Lys131, Lys140, and 158–161; these read DGEEYK, GVISD, TT, and FLKT. Zn(2+) is bound by residues Glu173, His239, and His256.

This sequence belongs to the sugar phosphate cyclases superfamily. Dehydroquinate synthase family. Requires Co(2+) as cofactor. Zn(2+) is required as a cofactor. NAD(+) serves as cofactor.

It localises to the cytoplasm. The catalysed reaction is 7-phospho-2-dehydro-3-deoxy-D-arabino-heptonate = 3-dehydroquinate + phosphate. It participates in metabolic intermediate biosynthesis; chorismate biosynthesis; chorismate from D-erythrose 4-phosphate and phosphoenolpyruvate: step 2/7. In terms of biological role, catalyzes the conversion of 3-deoxy-D-arabino-heptulosonate 7-phosphate (DAHP) to dehydroquinate (DHQ). The sequence is that of 3-dehydroquinate synthase from Campylobacter jejuni subsp. jejuni serotype O:6 (strain 81116 / NCTC 11828).